The primary structure comprises 151 residues: Neuroglobin (151 aa).

The region spanning 1–149 (MERPEPELIR…VVQAMSRGWD (149 aa)) is the Globin domain. Positions 64 and 96 each coordinate heme b.

It belongs to the globin family. As to quaternary structure, monomer. Homodimer and homotetramer; disulfide-linked. Mainly monomeric but also detected as part of homodimers and homotetramers. Interacts with 14-3-3 proteins; regulates the phosphorylation of NGB. Could interact (ferrous form) with G-alpha(i) proteins (GTP-bound form). In terms of processing, phosphorylated during hypoxia by ERK1/ERK2. Phosphorylation regulates the heme pocket hexacoordination preventing the association of His-64 with the heme metal center. Thereby, promotes the access of dioxygen and nitrite to the heme and stimulates the nitrite reductase activity. Phosphorylation during hypoxia is stabilized by 14-3-3 proteins.

Its subcellular location is the cytoplasm. The protein localises to the cytosol. It is found in the mitochondrion matrix. It carries out the reaction Fe(III)-heme b-[protein] + nitric oxide + H2O = Fe(II)-heme b-[protein] + nitrite + 2 H(+). Its function is as follows. Monomeric globin with a bis-histidyl six-coordinate heme-iron atom through which it can bind dioxygen, carbon monoxide and nitric oxide. Could help transport oxygen and increase its availability to the metabolically active neuronal tissues, though its low quantity in tissues as well as its high affinity for dioxygen, which may limit its oxygen-releasing ability, argue against it. The ferrous/deoxygenated form exhibits a nitrite reductase activity and it could produce nitric oxide which in turn inhibits cellular respiration in response to hypoxia. In its ferrous/deoxygenated state, it may also exhibit GDI (Guanine nucleotide Dissociation Inhibitor) activity toward heterotrimeric G-alpha proteins, thereby regulating signal transduction to facilitate neuroprotective responses in the wake of hypoxia and associated oxidative stress. The protein is Neuroglobin of Macaca mulatta (Rhesus macaque).